A 148-amino-acid polypeptide reads, in one-letter code: Proline-rich nuclear receptor coactivator 2 (148 aa).

The segment at 1–69 is disordered; sequence MGGGERYNIP…WSPEARQAVS (69 aa). Positions 109–115 match the SH3-binding motif; the sequence is SEPPSPS.

The protein belongs to the PNRC family. PNRC2 subfamily.

Its subcellular location is the nucleus. It localises to the cytoplasm. The protein resides in the P-body. Involved in nonsense-mediated mRNA decay (NMD) by acting as a bridge between the mRNA decapping complex and the NMD machinery. May act by targeting the NMD machinery to the P-body and recruiting the decapping machinery to aberrant mRNAs. Required for upf1/rent1 localization to the P-body. Also acts as a nuclear receptor coactivator. This chain is Proline-rich nuclear receptor coactivator 2 (pnrc2), found in Danio rerio (Zebrafish).